The primary structure comprises 268 residues: Agamous-like MADS-box protein AGL15 (268 aa).

Residues 1 to 61 (MGRGKIEIKR…GKLFEYSSTG (61 aa)) form the MADS-box domain. Residues 80–170 (AEEDCAEVDI…RRQVQELRSF (91 aa)) enclose the K-box domain. The interval 205–268 (TDSDTTLQLG…PEAKRQRFSV (64 aa)) is disordered. Basic and acidic residues predominate over residues 218–232 (EAHDRRTNEGERESP). Positions 233-244 (SSDSVTTNTSSE) are enriched in polar residues.

In terms of assembly, homodimer. Interacts with SVP, AGL24, AP1, AGL6, AG, AGL1, AGL11, AGL5, AGL16, SOC1 and AGL21. In terms of tissue distribution, expressed at low levels in flowers and siliques. Also present in seedlings. Detected during embryogenesis and accumulates during early seed development (at protein level). Expressed in shoot apices and the base of leaf petioles.

Its subcellular location is the nucleus. The protein localises to the cytoplasm. Transcription factor involved in the negative regulation of flowering, probably through the photoperiodic pathway. Acts both as an activator and as a repressor of transcription. Binds DNA in a sequence-specific manner in large CArG motif 5'-CC (A/T)8 GG-3'. Participates probably in the regulation of programs active during the early stages of embryo development. Prevents premature perianth senescence and abscission, fruits development and seed desiccation. Stimulates the expression of at least DTA4, LEC2, FUS3, ABI3, AT4G38680/CSP2 and GRP2B/CSP4. Can enhance somatic embryo development in vitro. The sequence is that of Agamous-like MADS-box protein AGL15 (AGL15) from Arabidopsis thaliana (Mouse-ear cress).